Consider the following 207-residue polypeptide: Large ribosomal subunit protein uL4 (207 aa).

The segment at 49–75 (HAVKNRSAVSGGGRKPWKQKGTGRARA) is disordered.

The protein belongs to the universal ribosomal protein uL4 family. As to quaternary structure, part of the 50S ribosomal subunit.

One of the primary rRNA binding proteins, this protein initially binds near the 5'-end of the 23S rRNA. It is important during the early stages of 50S assembly. It makes multiple contacts with different domains of the 23S rRNA in the assembled 50S subunit and ribosome. Its function is as follows. Forms part of the polypeptide exit tunnel. The polypeptide is Large ribosomal subunit protein uL4 (Leuconostoc mesenteroides subsp. mesenteroides (strain ATCC 8293 / DSM 20343 / BCRC 11652 / CCM 1803 / JCM 6124 / NCDO 523 / NBRC 100496 / NCIMB 8023 / NCTC 12954 / NRRL B-1118 / 37Y)).